Reading from the N-terminus, the 190-residue chain is Sec-independent protein translocase protein TatB (190 aa).

Residues Leu2 to Gly22 form a helical membrane-spanning segment. The disordered stretch occupies residues Ile130 to Ser190. A compositionally biased stretch (basic residues) spans Pro134–Ala144. Over residues Ala145 to Ala163 the composition is skewed to low complexity.

Belongs to the TatB family. In terms of assembly, the Tat system comprises two distinct complexes: a TatABC complex, containing multiple copies of TatA, TatB and TatC subunits, and a separate TatA complex, containing only TatA subunits. Substrates initially bind to the TatABC complex, which probably triggers association of the separate TatA complex to form the active translocon.

Its subcellular location is the cell inner membrane. Part of the twin-arginine translocation (Tat) system that transports large folded proteins containing a characteristic twin-arginine motif in their signal peptide across membranes. Together with TatC, TatB is part of a receptor directly interacting with Tat signal peptides. TatB may form an oligomeric binding site that transiently accommodates folded Tat precursor proteins before their translocation. This chain is Sec-independent protein translocase protein TatB, found in Caulobacter sp. (strain K31).